The primary structure comprises 240 residues: Aspartate/glutamate leucyltransferase (240 aa).

Belongs to the R-transferase family. Bpt subfamily.

Its subcellular location is the cytoplasm. The catalysed reaction is N-terminal L-glutamyl-[protein] + L-leucyl-tRNA(Leu) = N-terminal L-leucyl-L-glutamyl-[protein] + tRNA(Leu) + H(+). The enzyme catalyses N-terminal L-aspartyl-[protein] + L-leucyl-tRNA(Leu) = N-terminal L-leucyl-L-aspartyl-[protein] + tRNA(Leu) + H(+). In terms of biological role, functions in the N-end rule pathway of protein degradation where it conjugates Leu from its aminoacyl-tRNA to the N-termini of proteins containing an N-terminal aspartate or glutamate. The protein is Aspartate/glutamate leucyltransferase of Gluconobacter oxydans (strain 621H) (Gluconobacter suboxydans).